We begin with the raw amino-acid sequence, 313 residues long: Sorting nexin-20 (313 aa).

Residues 1 to 61 form a disordered region; the sequence is MASPQHPGGP…MTTRELQEHW (61 aa). Phosphoserine is present on S3. Residues 29–38 are compositionally biased toward pro residues; that stretch reads PPGPDLPCPG. Residues 45–55 are compositionally biased toward polar residues; the sequence is GPTSNSNMTTR. Residues 71–188 enclose the PX domain; sequence VRLLFEIASA…DFLTRPELCE (118 aa). A 1,2-diacyl-sn-glycero-3-phospho-(1D-myo-inositol-3-phosphate) contacts are provided by R113, S115, K140, and R154.

It belongs to the sorting nexin family. Interacts with SELPLG. Interaction with SELPLG is controversial.

Its subcellular location is the early endosome membrane. The protein localises to the cell membrane. It is found in the cytoplasm. The protein resides in the nucleus. In terms of biological role, may play a role in cellular vesicle trafficking. Has been proposed to function as a sorting protein that targets SELPLG into endosomes, but has no effect on SELPLG internalization from the cell surface, or on SELPLG-mediated cell-cell adhesion. In Rattus norvegicus (Rat), this protein is Sorting nexin-20 (Snx20).